Here is a 601-residue protein sequence, read N- to C-terminus: Elongation factor 4 (601 aa).

A tr-type G domain is found at 5 to 187 (SNIRNFSIIA…AIVERLPAPE (183 aa)). GTP is bound by residues 17–22 (DHGKST) and 134–137 (NKID).

It belongs to the TRAFAC class translation factor GTPase superfamily. Classic translation factor GTPase family. LepA subfamily.

It is found in the cell inner membrane. It catalyses the reaction GTP + H2O = GDP + phosphate + H(+). In terms of biological role, required for accurate and efficient protein synthesis under certain stress conditions. May act as a fidelity factor of the translation reaction, by catalyzing a one-codon backward translocation of tRNAs on improperly translocated ribosomes. Back-translocation proceeds from a post-translocation (POST) complex to a pre-translocation (PRE) complex, thus giving elongation factor G a second chance to translocate the tRNAs correctly. Binds to ribosomes in a GTP-dependent manner. This Oleidesulfovibrio alaskensis (strain ATCC BAA-1058 / DSM 17464 / G20) (Desulfovibrio alaskensis) protein is Elongation factor 4.